The sequence spans 1298 residues: Phosphoribosylformylglycinamidine synthase (1298 aa).

The tract at residues 301-328 (APFPGASTGSGGEIRDEGATGRGAKPKA) is disordered. Residues 305 to 316 (GASTGSGGEIRD), 384 to 386 (TGY), and Ala676 contribute to the ATP site. Positions 677, 716, 720, and 884 each coordinate Mg(2+). Ser886 contributes to the ATP binding site. In terms of domain architecture, Glutamine amidotransferase type-1 spans 1045–1298 (VAVLREQGVN…MFRNARVWVN (254 aa)). Cys1138 serves as the catalytic Nucleophile. Active-site residues include His1263 and Glu1265.

The protein in the N-terminal section; belongs to the FGAMS family. In terms of assembly, monomer.

It is found in the cytoplasm. The catalysed reaction is N(2)-formyl-N(1)-(5-phospho-beta-D-ribosyl)glycinamide + L-glutamine + ATP + H2O = 2-formamido-N(1)-(5-O-phospho-beta-D-ribosyl)acetamidine + L-glutamate + ADP + phosphate + H(+). Its pathway is purine metabolism; IMP biosynthesis via de novo pathway; 5-amino-1-(5-phospho-D-ribosyl)imidazole from N(2)-formyl-N(1)-(5-phospho-D-ribosyl)glycinamide: step 1/2. In terms of biological role, phosphoribosylformylglycinamidine synthase involved in the purines biosynthetic pathway. Catalyzes the ATP-dependent conversion of formylglycinamide ribonucleotide (FGAR) and glutamine to yield formylglycinamidine ribonucleotide (FGAM) and glutamate. This Pseudomonas fluorescens (strain Pf0-1) protein is Phosphoribosylformylglycinamidine synthase.